The primary structure comprises 425 residues: MPQESSDAKRIEPPRKVDFMLKPRFTNTVPDVPFDAKFMTCPFVPLGRFVEFQPAAIYRDYKHAVICDDDMGLNVDLIDLKKYDEDPIETEIDEKDNILLEDDGAAKLIAKRSQQHSKLVPWMRKTEYISTEFNRFGVTADRQETKLGYNLKKNQQVEDMYRDKQSQIDAINKTFEDVRKPVKEHYSKKGVKAVEESFVFPDFDHWKHLFAHVQFDGDTITTEFEEEDERQQARESSVIKAMEFEDQKFAAVFVPTIGCLTSFMDDLELERPFDEDMKYEFLLSREYTFKMEHLPPRDRDVFIMYHRNNVFQYNEVDCNVKMTRKPKMALSRKSKLTLTYRNPSELEQKDMNKREAELYEQPKTRKQEILEKIQEKKEEGGDSSDQSSDSDDDKPQKSRSDSSSDVSSDDDSPRKKEPTVDSDSD.

Residues 152–174 adopt a coiled-coil conformation; it reads KKNQQVEDMYRDKQSQIDAINKT. The disordered stretch occupies residues 331–425; it reads SRKSKLTLTY…KEPTVDSDSD (95 aa). Composition is skewed to basic and acidic residues over residues 344 to 380 and 393 to 402; these read SELEQKDMNKREAELYEQPKTRKQEILEKIQEKKEEG and DKPQKSRSDS.

The protein belongs to the PAF1 family. In terms of assembly, component of the PAF1 complex which consists of at least cdc-73, ctr-9, leo-1, pafo-1 and rtfo-1.

It is found in the nucleus. In terms of biological role, component of the PAF1 complex which is a multifunctional complex involved in transcription initiation via genetic interactions with TATA-binding proteins, elongation and transcription-coupled histone modification. The protein is RNA polymerase II-associated factor 1 homolog of Caenorhabditis elegans.